The chain runs to 121 residues: Cu-Zn superoxide dismutase-like protein (121 aa).

A disulfide bridge connects residues cysteine 48 and cysteine 98.

This sequence belongs to the Cu-Zn superoxide dismutase family.

The protein resides in the host cytoplasm. In terms of biological role, virion protein with no enzymatic activity. In Vaccinia virus (strain Ankara) (VACV), this protein is Cu-Zn superoxide dismutase-like protein.